The chain runs to 179 residues: Large ribosomal subunit protein uL6 (179 aa).

Belongs to the universal ribosomal protein uL6 family. As to quaternary structure, part of the 50S ribosomal subunit.

Its function is as follows. This protein binds to the 23S rRNA, and is important in its secondary structure. It is located near the subunit interface in the base of the L7/L12 stalk, and near the tRNA binding site of the peptidyltransferase center. The sequence is that of Large ribosomal subunit protein uL6 from Synechococcus sp. (strain CC9311).